Consider the following 471-residue polypeptide: 3-isopropylmalate dehydratase large subunit (471 aa).

Residues cysteine 351, cysteine 414, and cysteine 417 each contribute to the [4Fe-4S] cluster site.

It belongs to the aconitase/IPM isomerase family. LeuC type 1 subfamily. In terms of assembly, heterodimer of LeuC and LeuD. Requires [4Fe-4S] cluster as cofactor.

The enzyme catalyses (2R,3S)-3-isopropylmalate = (2S)-2-isopropylmalate. The protein operates within amino-acid biosynthesis; L-leucine biosynthesis; L-leucine from 3-methyl-2-oxobutanoate: step 2/4. Catalyzes the isomerization between 2-isopropylmalate and 3-isopropylmalate, via the formation of 2-isopropylmaleate. The chain is 3-isopropylmalate dehydratase large subunit from Colwellia psychrerythraea (strain 34H / ATCC BAA-681) (Vibrio psychroerythus).